The sequence spans 333 residues: Uroporphyrinogen decarboxylase (333 aa).

Substrate is bound by residues 21–25 (RQVGR), aspartate 70, tyrosine 139, serine 194, and histidine 309.

Belongs to the uroporphyrinogen decarboxylase family. Homodimer.

It localises to the cytoplasm. It carries out the reaction uroporphyrinogen III + 4 H(+) = coproporphyrinogen III + 4 CO2. Its pathway is porphyrin-containing compound metabolism; protoporphyrin-IX biosynthesis; coproporphyrinogen-III from 5-aminolevulinate: step 4/4. In terms of biological role, catalyzes the decarboxylation of four acetate groups of uroporphyrinogen-III to yield coproporphyrinogen-III. This Chlamydia abortus (strain DSM 27085 / S26/3) (Chlamydophila abortus) protein is Uroporphyrinogen decarboxylase.